Consider the following 40-residue polypeptide: Cytochrome b6-f complex subunit 5 (40 aa).

A helical transmembrane segment spans residues 5–25 (ILLGMVLGFVPVTIAGLLVAA).

It belongs to the PetG family. As to quaternary structure, the 4 large subunits of the cytochrome b6-f complex are cytochrome b6, subunit IV (17 kDa polypeptide, PetD), cytochrome f and the Rieske protein, while the 4 small subunits are PetG, PetL, PetM and PetN. The complex functions as a dimer.

The protein resides in the cell inner membrane. Component of the cytochrome b6-f complex, which mediates electron transfer between photosystem II (PSII) and photosystem I (PSI), cyclic electron flow around PSI, and state transitions. PetG is required for either the stability or assembly of the cytochrome b6-f complex. The chain is Cytochrome b6-f complex subunit 5 from Gloeobacter violaceus (strain ATCC 29082 / PCC 7421).